Consider the following 152-residue polypeptide: Cell division protein SepF (152 aa).

Belongs to the SepF family. Homodimer. Interacts with FtsZ.

The protein resides in the cytoplasm. Functionally, cell division protein that is part of the divisome complex and is recruited early to the Z-ring. Probably stimulates Z-ring formation, perhaps through the cross-linking of FtsZ protofilaments. Its function overlaps with FtsA. This is Cell division protein SepF from Clostridioides difficile (strain 630) (Peptoclostridium difficile).